Here is a 210-residue protein sequence, read N- to C-terminus: Large ribosomal subunit protein uL3 (210 aa).

The segment at 133 to 156 (ASHGNSLSHRVPGSIGQNQTPGKV) is disordered. Glutamine 151 carries the N5-methylglutamine modification.

Belongs to the universal ribosomal protein uL3 family. Part of the 50S ribosomal subunit. Forms a cluster with proteins L14 and L19. In terms of processing, methylated by PrmB.

In terms of biological role, one of the primary rRNA binding proteins, it binds directly near the 3'-end of the 23S rRNA, where it nucleates assembly of the 50S subunit. The polypeptide is Large ribosomal subunit protein uL3 (Hamiltonella defensa subsp. Acyrthosiphon pisum (strain 5AT)).